Consider the following 368-residue polypeptide: 2-aminoethylphosphonate--pyruvate transaminase (368 aa).

K192 carries the N6-(pyridoxal phosphate)lysine modification.

This sequence belongs to the class-V pyridoxal-phosphate-dependent aminotransferase family. PhnW subfamily. As to quaternary structure, homodimer. Pyridoxal 5'-phosphate serves as cofactor.

The enzyme catalyses (2-aminoethyl)phosphonate + pyruvate = phosphonoacetaldehyde + L-alanine. Functionally, involved in phosphonate degradation. In Pseudomonas putida (strain ATCC 700007 / DSM 6899 / JCM 31910 / BCRC 17059 / LMG 24140 / F1), this protein is 2-aminoethylphosphonate--pyruvate transaminase.